The following is a 178-amino-acid chain: Tetratricopeptide repeat protein 9C (178 aa).

TPR repeat units follow at residues 15–48, 79–114, and 115–148; these read ASSF…LRSL, ADCY…QPEN, and VKAL…APKD.

This sequence belongs to the TTC9 family.

This Xenopus tropicalis (Western clawed frog) protein is Tetratricopeptide repeat protein 9C (ttc9c).